Here is a 663-residue protein sequence, read N- to C-terminus: Cytochrome bo(3) ubiquinol oxidase subunit 1 (663 aa).

Residues 1-16 (MFGKLSLDAVPFHEPI) are Periplasmic-facing. A helical transmembrane segment spans residues 17–35 (VMVTIAGIILGGLALVGLI). Topologically, residues 36 to 52 (TYFGKWTYLWKEWLTSV) are cytoplasmic. Residues 53–80 (DHKRLGIMYIIVAIVMLLRGFADAIMMR) traverse the membrane as a helical segment. Ubiquinone-8-binding residues include R71 and D75. At 81-95 (SQQALASAGEAGFLP) the chain is on the periplasmic side. The helical transmembrane segment at 96 to 132 (PHHYDQIFTAHGVIMIFFVAMPFVIGLMNLVVPLQIG) threads the bilayer. H98 contributes to the ubiquinone-8 binding site. Position 106 (H106) interacts with heme b. Residues 133–137 (ARDVA) are Cytoplasmic-facing. A helical membrane pass occupies residues 138–161 (FPFLNNLSFWFTVVGVILVNVSLG). Residues 162 to 184 (VGEFAQTGWLAYPPLSGIEYSPG) lie on the Periplasmic side of the membrane. Heme b is bound at residue W170. Residues 185–215 (VGVDYWIWSLQLSGIGTTLTGINFFVTILKM) form a helical membrane-spanning segment. The Cytoplasmic portion of the chain corresponds to 216–224 (RAPGMTMFK). A helical membrane pass occupies residues 225–260 (MPVFTWASLCANVLIIASFPILTVTVALLTLDRYLG). Over 261 to 270 (THFFTNDMGG) the chain is Periplasmic. A helical transmembrane segment spans residues 271–307 (NMMMYINLIWAWGHPEVYILILPVFGVFSEIAATFSR). A Cu(2+)-binding site is contributed by H284. Positions 284–288 (HPEVY) form a cross-link, 1'-histidyl-3'-tyrosine (His-Tyr). Y288 is a binding site for Fe(II)-heme o. Residues 308-311 (KRLF) lie on the Cytoplasmic side of the membrane. A helical transmembrane segment spans residues 312 to 326 (GYTSLVWATVCITVL). Over 327–340 (SFIVWLHHFFTMGA) the chain is Periplasmic. H333 and H334 together coordinate Cu(2+). The helical transmembrane segment at 341–369 (GANVNAFFGITTMIIAIPTGVKIFNWLFT) threads the bilayer. Over 370–377 (MYQGRIVF) the chain is Cytoplasmic. Residues 378–409 (HSAMLWTIGFIVTFSVGGMTGVLLAVPGADFV) traverse the membrane as a helical segment. The Periplasmic portion of the chain corresponds to 410-412 (LHN). Residues H411 and H419 each coordinate Fe(II)-heme o. A helical transmembrane segment spans residues 413–445 (SLFLIAHFHNVIIGGVVFGCFAGMTYWWPKAFG). H421 provides a ligand contact to heme b. At 446–448 (FKL) the chain is on the cytoplasmic side. The chain crosses the membrane as a helical span at residues 449 to 477 (NETWGKRAFWFWIIGFFVAFMPLYALGFM). Over 478–489 (GMTRRLSQQIDP) the chain is Periplasmic. Heme b-binding residues include R481 and R482. Residues 490–521 (QFHTMLMIAASGAVLIALGILCLVIQMYVSIR) form a helical membrane-spanning segment. Residues 522 to 587 (DRDQNRDLTG…DHYEEIHMPK (66 aa)) lie on the Cytoplasmic side of the membrane. A helical transmembrane segment spans residues 588–606 (NSGAGIVIAAFSTIFGFAM). Residues 607-613 (IWHIWWL) are Periplasmic-facing. Residues 614–632 (AIVGFAGMIITWIVKSFDE) traverse the membrane as a helical segment. Topologically, residues 633–663 (DVDYYVPVAEIEKLENQHFDEITKAGLKNGN) are cytoplasmic.

This sequence belongs to the heme-copper respiratory oxidase family. In terms of assembly, the cytochrome bo(3) ubiquinol oxidase complex is a heterooctamer of two A chains, two B chains, two C chains and two D chains. Requires Cu(2+) as cofactor. Heme b is required as a cofactor. The cofactor is Fe(II)-heme o.

It localises to the cell inner membrane. The enzyme catalyses 2 a ubiquinol + O2 + n H(+)(in) = 2 a ubiquinone + 2 H2O + n H(+)(out). Its function is as follows. Cytochrome bo(3) ubiquinol oxidase is the terminal enzyme in the aerobic respiratory chain of E.coli that predominates when cells are grown at high aeration. Catalyzes the four-electron reduction of O2 to water, using a ubiquinol as a membrane soluble electron donor for molecular oxygen reduction; ubiquinol-8 is the natural substrate for E.coli. Has proton pump activity across the membrane in addition to electron transfer, pumping 2 protons/electron and generating a proton motive force. All the redox centers of this enzyme complex are located within the largest subunit, subunit I. Protons are probably pumped via D- and K- channels found in this subunit. The protein is Cytochrome bo(3) ubiquinol oxidase subunit 1 (cyoB) of Escherichia coli O157:H7.